Reading from the N-terminus, the 247-residue chain is Peroxisomal membrane protein 11A (247 aa).

The Cytoplasmic portion of the chain corresponds to 1–83 (MDAFIRFTNQ…SVRATDLVPR (83 aa)). A helical membrane pass occupies residues 84-105 (ICLTLASLNRVIYFICDTVLFV). Residues 106–219 (RSTGLASGVN…DQLGIYKSNP (114 aa)) lie on the Lumenal side of the membrane. Residues 220–239 (GIIGLGGLVSSVAGIITVAY) traverse the membrane as a helical segment. Residues 220–239 (GIIGLGGLVSSVAGIITVAY) form a required for homodimerization, interaction with PEX11G, and peroxisomal localization region. Residues 240–247 (PQMKLKTQ) are Cytoplasmic-facing.

It belongs to the peroxin-11 family. In terms of assembly, homodimer. Heterodimer with PEX11G. Probably interacts with COPB2 and COPA. Interacts with PEX19. Interacts with FIS1.

Its subcellular location is the peroxisome membrane. May be involved in peroxisomal proliferation and may regulate peroxisomes division. May mediate binding of coatomer proteins to the peroxisomal membrane. Promotes membrane protrusion and elongation on the peroxisomal surface. In Bos taurus (Bovine), this protein is Peroxisomal membrane protein 11A (PEX11A).